We begin with the raw amino-acid sequence, 374 residues long: Chaperone protein DnaJ (374 aa).

The region spanning D5 to G70 is the J domain. The CR-type zinc finger occupies G130 to D207. Zn(2+)-binding residues include C143, C146, C159, C162, C181, C184, C195, and C198. CXXCXGXG motif repeat units follow at residues C143–G150, C159–G166, C181–G188, and C195–G202.

Belongs to the DnaJ family. Homodimer. The cofactor is Zn(2+).

It localises to the cytoplasm. Functionally, participates actively in the response to hyperosmotic and heat shock by preventing the aggregation of stress-denatured proteins and by disaggregating proteins, also in an autonomous, DnaK-independent fashion. Unfolded proteins bind initially to DnaJ; upon interaction with the DnaJ-bound protein, DnaK hydrolyzes its bound ATP, resulting in the formation of a stable complex. GrpE releases ADP from DnaK; ATP binding to DnaK triggers the release of the substrate protein, thus completing the reaction cycle. Several rounds of ATP-dependent interactions between DnaJ, DnaK and GrpE are required for fully efficient folding. Also involved, together with DnaK and GrpE, in the DNA replication of plasmids through activation of initiation proteins. The sequence is that of Chaperone protein DnaJ from Stenotrophomonas maltophilia (strain K279a).